Here is a 914-residue protein sequence, read N- to C-terminus: Alanine--tRNA ligase (914 aa).

Zn(2+) contacts are provided by histidine 613, histidine 617, cysteine 717, and histidine 721.

The protein belongs to the class-II aminoacyl-tRNA synthetase family. It depends on Zn(2+) as a cofactor.

It is found in the cytoplasm. The enzyme catalyses tRNA(Ala) + L-alanine + ATP = L-alanyl-tRNA(Ala) + AMP + diphosphate. In terms of biological role, catalyzes the attachment of alanine to tRNA(Ala) in a two-step reaction: alanine is first activated by ATP to form Ala-AMP and then transferred to the acceptor end of tRNA(Ala). Also edits incorrectly charged Ser-tRNA(Ala) and Gly-tRNA(Ala) via its editing domain. The chain is Alanine--tRNA ligase from Pyrococcus abyssi (strain GE5 / Orsay).